The following is a 216-amino-acid chain: Uracil phosphoribosyltransferase (216 aa).

Residues arginine 85, arginine 110, and 135-143 (DPMVATGYS) each bind 5-phospho-alpha-D-ribose 1-diphosphate. Uracil contacts are provided by residues isoleucine 200 and 205–207 (GDA). Aspartate 206 contacts 5-phospho-alpha-D-ribose 1-diphosphate.

It belongs to the UPRTase family. The cofactor is Mg(2+).

It catalyses the reaction UMP + diphosphate = 5-phospho-alpha-D-ribose 1-diphosphate + uracil. Its pathway is pyrimidine metabolism; UMP biosynthesis via salvage pathway; UMP from uracil: step 1/1. With respect to regulation, allosterically activated by GTP. Functionally, catalyzes the conversion of uracil and 5-phospho-alpha-D-ribose 1-diphosphate (PRPP) to UMP and diphosphate. The protein is Uracil phosphoribosyltransferase of Burkholderia ambifaria (strain ATCC BAA-244 / DSM 16087 / CCUG 44356 / LMG 19182 / AMMD) (Burkholderia cepacia (strain AMMD)).